The following is a 227-amino-acid chain: Cytochrome c oxidase subunit 2 (227 aa).

The Mitochondrial intermembrane portion of the chain corresponds to 1–14; sequence MAYPFQLGFQDATS. The chain crosses the membrane as a helical span at residues 15–45; sequence PIMEELLHFHDHTLMIVFLISSLVLYIISLM. Over 46-59 the chain is Mitochondrial matrix; the sequence is LTTKLTHTSTMDAQ. Residues 60–87 traverse the membrane as a helical segment; that stretch reads EVETIWTILPAIILILIALPSLRILYMM. The Mitochondrial intermembrane segment spans residues 88–227; that stretch reads DEINNPSLTV…HFEKWSASML (140 aa). Cu cation-binding residues include histidine 161, cysteine 196, glutamate 198, cysteine 200, histidine 204, and methionine 207. Glutamate 198 serves as a coordination point for Mg(2+).

It belongs to the cytochrome c oxidase subunit 2 family. In terms of assembly, component of the cytochrome c oxidase (complex IV, CIV), a multisubunit enzyme composed of 14 subunits. The complex is composed of a catalytic core of 3 subunits MT-CO1, MT-CO2 and MT-CO3, encoded in the mitochondrial DNA, and 11 supernumerary subunits COX4I, COX5A, COX5B, COX6A, COX6B, COX6C, COX7A, COX7B, COX7C, COX8 and NDUFA4, which are encoded in the nuclear genome. The complex exists as a monomer or a dimer and forms supercomplexes (SCs) in the inner mitochondrial membrane with NADH-ubiquinone oxidoreductase (complex I, CI) and ubiquinol-cytochrome c oxidoreductase (cytochrome b-c1 complex, complex III, CIII), resulting in different assemblies (supercomplex SCI(1)III(2)IV(1) and megacomplex MCI(2)III(2)IV(2)). Found in a complex with TMEM177, COA6, COX18, COX20, SCO1 and SCO2. Interacts with TMEM177 in a COX20-dependent manner. Interacts with COX20. Interacts with COX16. Cu cation serves as cofactor.

It localises to the mitochondrion inner membrane. It carries out the reaction 4 Fe(II)-[cytochrome c] + O2 + 8 H(+)(in) = 4 Fe(III)-[cytochrome c] + 2 H2O + 4 H(+)(out). In terms of biological role, component of the cytochrome c oxidase, the last enzyme in the mitochondrial electron transport chain which drives oxidative phosphorylation. The respiratory chain contains 3 multisubunit complexes succinate dehydrogenase (complex II, CII), ubiquinol-cytochrome c oxidoreductase (cytochrome b-c1 complex, complex III, CIII) and cytochrome c oxidase (complex IV, CIV), that cooperate to transfer electrons derived from NADH and succinate to molecular oxygen, creating an electrochemical gradient over the inner membrane that drives transmembrane transport and the ATP synthase. Cytochrome c oxidase is the component of the respiratory chain that catalyzes the reduction of oxygen to water. Electrons originating from reduced cytochrome c in the intermembrane space (IMS) are transferred via the dinuclear copper A center (CU(A)) of subunit 2 and heme A of subunit 1 to the active site in subunit 1, a binuclear center (BNC) formed by heme A3 and copper B (CU(B)). The BNC reduces molecular oxygen to 2 water molecules using 4 electrons from cytochrome c in the IMS and 4 protons from the mitochondrial matrix. This is Cytochrome c oxidase subunit 2 (MT-CO2) from Ceratotherium simum (White rhinoceros).